A 592-amino-acid polypeptide reads, in one-letter code: Imidazole glycerol phosphate synthase hisHF, chloroplastic (592 aa).

Residues 1 to 55 (MEATAAPFSSIVSSRQNFSSSSSIRASSPASLFLSQKSIGNVNRKFKSPRSLSVR) constitute a chloroplast transit peptide. The Glutamine amidotransferase type-1 domain occupies 63 to 271 (VVTLLDYGAG…LHPKLPATQK (209 aa)). Active-site for GATase activity residues include C141, H246, and E248. The segment at 280–592 (LAKRVIACLD…LQEERIEVRI (313 aa)) is cyclase. Active-site residues include D289 and D447.

The protein in the C-terminal section; belongs to the HisA/HisF family.

The protein localises to the plastid. The protein resides in the chloroplast. It catalyses the reaction 5-[(5-phospho-1-deoxy-D-ribulos-1-ylimino)methylamino]-1-(5-phospho-beta-D-ribosyl)imidazole-4-carboxamide + L-glutamine = D-erythro-1-(imidazol-4-yl)glycerol 3-phosphate + 5-amino-1-(5-phospho-beta-D-ribosyl)imidazole-4-carboxamide + L-glutamate + H(+). It carries out the reaction L-glutamine + H2O = L-glutamate + NH4(+). It participates in amino-acid biosynthesis; L-histidine biosynthesis; L-histidine from 5-phospho-alpha-D-ribose 1-diphosphate: step 5/9. In terms of biological role, IGPS catalyzes the conversion of PRFAR and glutamine to IGP, AICAR and glutamate. The glutaminase domain produces the ammonia necessary for the cyclase domain to produce IGP and AICAR from PRFAR. The ammonia is channeled to the active site of the cyclase domain. This chain is Imidazole glycerol phosphate synthase hisHF, chloroplastic (HISN4), found in Arabidopsis thaliana (Mouse-ear cress).